Consider the following 628-residue polypeptide: Chaperone protein HtpG (628 aa).

Residues 1 to 337 form an a; substrate-binding region; it reads MSEKKYTFET…SADLPLNVSR (337 aa). The tract at residues 338–554 is b; it reads EILQHNKVID…DYGMSLHMQK (217 aa). The c stretch occupies residues 555 to 628; the sequence is MMEEAGQSFM…FVKLVNKYIR (74 aa).

It belongs to the heat shock protein 90 family. In terms of assembly, homodimer.

The protein resides in the cytoplasm. Its function is as follows. Molecular chaperone. Has ATPase activity. The chain is Chaperone protein HtpG from Francisella tularensis subsp. holarctica (strain FTNF002-00 / FTA).